A 282-amino-acid polypeptide reads, in one-letter code: DNA-directed RNA polymerase III subunit RPC5 (282 aa).

Positions 1–70 (MSIDNKLFVT…TGEEEEDDPV (70 aa)) are disordered. Acidic residues-rich tracts occupy residues 10 to 35 (TEED…DMIA) and 60 to 70 (DTGEEEEDDPV). T61 is modified (phosphothreonine).

As to quaternary structure, component of the RNA polymerase III (Pol III) complex consisting of 17 subunits. Interacts with RPC53/RPC4. RPC53/RPC4, RPC37/RPC5 and RPC11/RPC10 probably form a Pol III subcomplex.

The protein localises to the nucleus. In terms of biological role, DNA-dependent RNA polymerase catalyzes the transcription of DNA into RNA using the four ribonucleoside triphosphates as substrates. Specific peripheric component of RNA polymerase III which synthesizes small RNAs, such as 5S rRNA and tRNAs. The RPC53/RPC4-RPC37/RPC5 subcomplex is required for terminator recognition and reinitiation. The chain is DNA-directed RNA polymerase III subunit RPC5 (RPC37) from Saccharomyces cerevisiae (strain ATCC 204508 / S288c) (Baker's yeast).